The chain runs to 467 residues: Siroheme synthase 2 (467 aa).

Residues 1 to 204 (MDYLPIFCQL…NDVALAERQI (204 aa)) are precorrin-2 dehydrogenase /sirohydrochlorin ferrochelatase. NAD(+) is bound by residues 22-23 (EI) and 43-44 (CS). The residue at position 128 (serine 128) is a Phosphoserine. The interval 216–467 (GEVVLVGAGP…EPSQPLAQMA (252 aa)) is uroporphyrinogen-III C-methyltransferase. Proline 225 provides a ligand contact to S-adenosyl-L-methionine. Catalysis depends on aspartate 248, which acts as the Proton acceptor. Residue lysine 270 is the Proton donor of the active site. S-adenosyl-L-methionine-binding positions include 301 to 303 (GGD), isoleucine 306, 331 to 332 (TA), methionine 382, and glycine 411.

In the N-terminal section; belongs to the precorrin-2 dehydrogenase / sirohydrochlorin ferrochelatase family. The protein in the C-terminal section; belongs to the precorrin methyltransferase family.

The catalysed reaction is uroporphyrinogen III + 2 S-adenosyl-L-methionine = precorrin-2 + 2 S-adenosyl-L-homocysteine + H(+). It carries out the reaction precorrin-2 + NAD(+) = sirohydrochlorin + NADH + 2 H(+). It catalyses the reaction siroheme + 2 H(+) = sirohydrochlorin + Fe(2+). The protein operates within cofactor biosynthesis; adenosylcobalamin biosynthesis; precorrin-2 from uroporphyrinogen III: step 1/1. It participates in cofactor biosynthesis; adenosylcobalamin biosynthesis; sirohydrochlorin from precorrin-2: step 1/1. Its pathway is porphyrin-containing compound metabolism; siroheme biosynthesis; precorrin-2 from uroporphyrinogen III: step 1/1. It functions in the pathway porphyrin-containing compound metabolism; siroheme biosynthesis; siroheme from sirohydrochlorin: step 1/1. The protein operates within porphyrin-containing compound metabolism; siroheme biosynthesis; sirohydrochlorin from precorrin-2: step 1/1. Functionally, multifunctional enzyme that catalyzes the SAM-dependent methylations of uroporphyrinogen III at position C-2 and C-7 to form precorrin-2 via precorrin-1. Then it catalyzes the NAD-dependent ring dehydrogenation of precorrin-2 to yield sirohydrochlorin. Finally, it catalyzes the ferrochelation of sirohydrochlorin to yield siroheme. This chain is Siroheme synthase 2, found in Serratia proteamaculans (strain 568).